The primary structure comprises 344 residues: Dihydroorotase (344 aa).

The Zn(2+) site is built by H13 and H15. Residues 15 to 17 and N41 contribute to the substrate site; that span reads HVR. Residues K99, H136, and H174 each contribute to the Zn(2+) site. K99 bears the N6-carboxylysine mark. H136 contributes to the substrate binding site. A substrate-binding site is contributed by L219. D247 lines the Zn(2+) pocket. D247 is an active-site residue. Residues H251 and A263 each contribute to the substrate site.

This sequence belongs to the metallo-dependent hydrolases superfamily. DHOase family. Class II DHOase subfamily. Homodimer. The cofactor is Zn(2+).

It carries out the reaction (S)-dihydroorotate + H2O = N-carbamoyl-L-aspartate + H(+). Its pathway is pyrimidine metabolism; UMP biosynthesis via de novo pathway; (S)-dihydroorotate from bicarbonate: step 3/3. Its function is as follows. Catalyzes the reversible cyclization of carbamoyl aspartate to dihydroorotate. In Aromatoleum aromaticum (strain DSM 19018 / LMG 30748 / EbN1) (Azoarcus sp. (strain EbN1)), this protein is Dihydroorotase.